The sequence spans 401 residues: Pectate lyase (401 aa).

Residues 1 to 20 form the signal peptide; sequence MATTILPLILFISSLAIASS. A glycan (N-linked (GlcNAc...) asparagine) is linked at Asn-38. Residues Asp-199, Asp-223, and Asp-227 each coordinate Ca(2+). The active site involves Arg-279.

Belongs to the polysaccharide lyase 1 family. Ca(2+) serves as cofactor. In terms of tissue distribution, expressed in sites of vascular differentiation and in new primordia on the flank of the shoot meristem.

It catalyses the reaction Eliminative cleavage of (1-&gt;4)-alpha-D-galacturonan to give oligosaccharides with 4-deoxy-alpha-D-galact-4-enuronosyl groups at their non-reducing ends.. Its pathway is glycan metabolism; pectin degradation; 2-dehydro-3-deoxy-D-gluconate from pectin: step 2/5. In terms of biological role, involved in the degradation of pectin. May assist in the removal and modification of an existing pectin matrix in order to allow the deposition of newly synthesized walls polymers for a specialized function or to create an architecture that is extensible. This Zinnia elegans (Garden zinnia) protein is Pectate lyase.